The sequence spans 199 residues: Glycerol-3-phosphate acyltransferase (199 aa).

5 consecutive transmembrane segments (helical) span residues 4-24, 51-71, 77-97, 111-131, and 152-172; these read LVSVAILGYLLGSIPVGFLMG, WAALFTVLCDIGKGLLAAYLG, EWGFVAAGLLASLGHSYPVWL, VMLLHYPLAVLVGIAAGALAV, and LFLLDAPLSHRLLVVALAVVI.

This sequence belongs to the PlsY family. As to quaternary structure, probably interacts with PlsX.

The protein localises to the cell membrane. The catalysed reaction is an acyl phosphate + sn-glycerol 3-phosphate = a 1-acyl-sn-glycero-3-phosphate + phosphate. The protein operates within lipid metabolism; phospholipid metabolism. In terms of biological role, catalyzes the transfer of an acyl group from acyl-phosphate (acyl-PO(4)) to glycerol-3-phosphate (G3P) to form lysophosphatidic acid (LPA). This enzyme utilizes acyl-phosphate as fatty acyl donor, but not acyl-CoA or acyl-ACP. The chain is Glycerol-3-phosphate acyltransferase from Symbiobacterium thermophilum (strain DSM 24528 / JCM 14929 / IAM 14863 / T).